Consider the following 627-residue polypeptide: (-)-alpha-pinene synthase 2, chloroplastic (627 aa).

The transit peptide at 1–36 (MALVSVAPMASRSCLHKSLSSSAHELKTICRTIPTL) directs the protein to the chloroplast. Asp-378, Asp-382, and Asp-530 together coordinate Mg(2+). The short motif at 378–382 (DDMYD) is the DDXXD motif element.

It belongs to the terpene synthase family. Tpsd subfamily. The cofactor is Mg(2+). It depends on Mn(2+) as a cofactor.

The protein resides in the plastid. It is found in the chloroplast. It carries out the reaction (2E)-geranyl diphosphate = (1S,5S)-alpha-pinene + diphosphate. The enzyme catalyses (2E)-geranyl diphosphate = (1S,5S)-beta-pinene + diphosphate. It functions in the pathway terpene metabolism; oleoresin biosynthesis. Functionally, involved in defensive oleoresin formation in conifers in response to insect attack or other injury. Involved in monoterpene (C10) olefins biosynthesis. A mixture of alpha- and beta-pinene (35:10) is produced by this enzyme. The protein is (-)-alpha-pinene synthase 2, chloroplastic of Picea sitchensis (Sitka spruce).